The primary structure comprises 347 residues: Protein RecA (347 aa).

66-73 is an ATP binding site; sequence GPESSGKT.

The protein belongs to the RecA family.

It is found in the cytoplasm. In terms of biological role, can catalyze the hydrolysis of ATP in the presence of single-stranded DNA, the ATP-dependent uptake of single-stranded DNA by duplex DNA, and the ATP-dependent hybridization of homologous single-stranded DNAs. It interacts with LexA causing its activation and leading to its autocatalytic cleavage. The protein is Protein RecA of Allochromatium vinosum (Chromatium vinosum).